We begin with the raw amino-acid sequence, 432 residues long: Adenosylhomocysteinase (432 aa).

N-acetylserine is present on Ser-2. Substrate is bound by residues Thr-57, Asp-131, and Glu-156. At Ser-183 the chain carries Phosphoserine. An NAD binding region spans residues 183 to 350; it reads SVTKSKFDNL…EGRLVNLGCA (168 aa). Substrate-binding residues include Lys-186 and Asp-190. N6-(2-hydroxyisobutyryl)lysine is present on Lys-186. At Tyr-193 the chain carries Phosphotyrosine.

Belongs to the adenosylhomocysteinase family. As to quaternary structure, homotetramer. Interaction with AHCYL1. NAD(+) is required as a cofactor.

It is found in the cytoplasm. The protein localises to the melanosome. The protein resides in the nucleus. Its subcellular location is the endoplasmic reticulum. The enzyme catalyses S-adenosyl-L-homocysteine + H2O = L-homocysteine + adenosine. The protein operates within amino-acid biosynthesis; L-homocysteine biosynthesis; L-homocysteine from S-adenosyl-L-homocysteine: step 1/1. Its function is as follows. Catalyzes the hydrolysis of S-adenosyl-L-homocysteine to form adenosine and homocysteine. Binds copper ions. The chain is Adenosylhomocysteinase (AHCY) from Macaca fascicularis (Crab-eating macaque).